Consider the following 259-residue polypeptide: MASEEASRNSRSRWEPEGRFPRQDKYSVLLPTYNERENLPLIVWLLVKSFSESGINYEIIIIDDGSPDGTRDIAEQLVKIYGSDKILLRPREKKLGLGTAYIHGMKHATGNYIIIMDADLSHHPKFIPEFIRKQKEGNFDIVSGTRYKGNGGVYGWDLKRKIISRGANFITQILLRPGASDLTGSFRLYRKEVLQKLIEKCVSKGYVFQMEMIVRARQLNYTIGEVPISFVDRVYGESKLGGNEIVSFLKGLLTLFATT.

At A2 the chain carries N-acetylalanine. At S3 the chain carries Phosphoserine. The GDP-alpha-D-mannose site is built by P31, Y33, E35, I62, D64, D117, A118, D119, R146, R233, and K239. D119 is a Mg(2+) binding site. A Mn(2+)-binding site is contributed by D119.

Belongs to the glycosyltransferase 2 family. As to quaternary structure, component of the dolichol-phosphate mannose (DPM) synthase complex composed of DPM1, DPM2 and DPM3; within the complex, directly interacts with DPM3. This interaction may stabilize DPM1. Requires Mg(2+) as cofactor. The cofactor is Mn(2+). It depends on Ca(2+) as a cofactor.

Its subcellular location is the endoplasmic reticulum. The enzyme catalyses a di-trans,poly-cis-dolichyl phosphate + GDP-alpha-D-mannose = a di-trans,poly-cis-dolichyl beta-D-mannosyl phosphate + GDP. It participates in protein modification; protein glycosylation. In terms of biological role, transfers mannose from GDP-mannose to dolichol monophosphate to form dolichol phosphate mannose (Dol-P-Man) which is the mannosyl donor in pathways leading to N-glycosylation, glycosyl phosphatidylinositol membrane anchoring, and O-mannosylation of proteins; catalytic subunit of the dolichol-phosphate mannose (DPM) synthase complex. This is Dolichol-phosphate mannosyltransferase subunit 1 (DPM1) from Sus scrofa (Pig).